Reading from the N-terminus, the 459-residue chain is MRTAWVAKRQGQTNVSQMHYARKGVITEEMDYVAKRENLPVELIKDEVARGRMIIPANINHTNLEPMAIGIASKCKVNANIGASPNSSNIDEEVEKLLLSVKYGADTVMDLSTGGGDLDVIRTAIINASPVPIGTVPIYQALESVHGSIENLTPDDFLHIIEKHAQQGVDYMTIHAGLLIEYLPLVKSRITGIVSRGGGIIAKWMLHHHKQNPLYTHFDEIIEIFKKYDVSFSLGDSLRPGCTHDASDDAQLSELKTLGQLTRRAWEHDVQVMVEGPGHVPIDQIEFNVKKQMEECSEAPFYVLGPLVTDIAPGYDHITSAIGAAIAGWHGTAMLCYVTPKEHLGLPNAEDVRNGLIAYKIAAHAADIARHRPGARDRDDELSKARYNFDWNRQFELSLDPERAKEYHDETLPADIYKTAEFCSMCGPKFCPMQTKVDAEMLEELEVFLAKDKEMVSQR.

Substrate-binding positions include N80, M109, Y139, H175, 195 to 197 (SRG), 236 to 239 (DSLR), and E275. H279 contributes to the Zn(2+) binding site. Y302 lines the substrate pocket. Residue H343 participates in Zn(2+) binding. Residues C423, C426, and C431 each contribute to the [4Fe-4S] cluster site.

It belongs to the ThiC family. [4Fe-4S] cluster is required as a cofactor.

It catalyses the reaction 5-amino-1-(5-phospho-beta-D-ribosyl)imidazole + S-adenosyl-L-methionine = 4-amino-2-methyl-5-(phosphooxymethyl)pyrimidine + CO + 5'-deoxyadenosine + formate + L-methionine + 3 H(+). Its pathway is cofactor biosynthesis; thiamine diphosphate biosynthesis. In terms of biological role, catalyzes the synthesis of the hydroxymethylpyrimidine phosphate (HMP-P) moiety of thiamine from aminoimidazole ribotide (AIR) in a radical S-adenosyl-L-methionine (SAM)-dependent reaction. The chain is Phosphomethylpyrimidine synthase from Synechocystis sp. (strain ATCC 27184 / PCC 6803 / Kazusa).